Here is a 905-residue protein sequence, read N- to C-terminus: Sun domain-containing protein 1 (905 aa).

Disordered regions lie at residues 1-21, 41-166, and 207-242; these read MSGD…LPLQ, NNTV…ILKQ, and QQQQ…IDNN. Topologically, residues 1–290 are nuclear; the sequence is MSGDYKPNYQ…NNNNKVNFKQ (290 aa). 2 stretches are compositionally biased toward low complexity: residues 41-67 and 75-101; these read NNTV…SSYL and SNQI…ASSS. The segment covering 107 to 116 has biased composition (basic and acidic residues); the sequence is KVDHNSHNNN. The segment covering 117 to 126 has biased composition (acidic residues); sequence DDDDIEDDVD. The segment covering 129 to 146 has biased composition (polar residues); the sequence is YSTNNASSNILHNRFSNS. Positions 170 to 221 form a coiled coil; it reads LYNHLNNQIQQQQQQQQQQQQQQQQQQQQQQQQQQQQQQQQQQQRNNNNNSN. Over residues 207–227 the composition is skewed to low complexity; sequence QQQQQQQRNNNNNSNSSNNNN. Residues 291-311 traverse the membrane as a helical segment; that stretch reads AIWIFIFSVLFIGCLLGLFST. The Perinuclear space segment spans residues 312 to 905; the sequence is NFYGIHIYFP…IEKQQQSDEL (594 aa). 2 coiled-coil regions span residues 359–456 and 504–609; these read KKNE…QLIQ and REFN…TQQF. The 199-residue stretch at 662 to 860 folds into the SUN domain; it reads GASIEYNALH…YRFRVHGYQI (199 aa). A coiled-coil region spans residues 864–901; the sequence is EQEQIQIIQEEQSFKQEEINQQQIEQIEQIEQIEKQQQ.

Homodimer and homooligomer.

The protein resides in the nucleus membrane. Its function is as follows. May have an important role in defining the spacing of the nuclear envelope lumen. Essential for centrosome attachment to the nucleus, maintenance of correct ploidy, proper mitosis, association of the centromere cluster with the centrosome and the maintenance of genome stability. Requires direct chromatin binding for inner nuclear membrane targeting. This Dictyostelium discoideum (Social amoeba) protein is Sun domain-containing protein 1 (sun1).